A 285-amino-acid polypeptide reads, in one-letter code: Pantothenate synthetase (285 aa).

30–37 (MGFLHEGH) is a binding site for ATP. The Proton donor role is filled by His-37. Gln-61 contacts (R)-pantoate. Residue Gln-61 participates in beta-alanine binding. 147–150 (GQKD) contacts ATP. Gln-153 lines the (R)-pantoate pocket. ATP is bound by residues Val-176 and 184 to 187 (KSSR).

Belongs to the pantothenate synthetase family. Homodimer.

It localises to the cytoplasm. It catalyses the reaction (R)-pantoate + beta-alanine + ATP = (R)-pantothenate + AMP + diphosphate + H(+). It functions in the pathway cofactor biosynthesis; (R)-pantothenate biosynthesis; (R)-pantothenate from (R)-pantoate and beta-alanine: step 1/1. Functionally, catalyzes the condensation of pantoate with beta-alanine in an ATP-dependent reaction via a pantoyl-adenylate intermediate. The sequence is that of Pantothenate synthetase from Listeria monocytogenes serovar 1/2a (strain ATCC BAA-679 / EGD-e).